A 167-amino-acid polypeptide reads, in one-letter code: Crossover junction endodeoxyribonuclease RuvC (167 aa).

Active-site residues include aspartate 7, glutamate 67, and aspartate 140. The Mg(2+) site is built by aspartate 7, glutamate 67, and aspartate 140.

It belongs to the RuvC family. Homodimer which binds Holliday junction (HJ) DNA. The HJ becomes 2-fold symmetrical on binding to RuvC with unstacked arms; it has a different conformation from HJ DNA in complex with RuvA. In the full resolvosome a probable DNA-RuvA(4)-RuvB(12)-RuvC(2) complex forms which resolves the HJ. Mg(2+) is required as a cofactor.

It localises to the cytoplasm. The enzyme catalyses Endonucleolytic cleavage at a junction such as a reciprocal single-stranded crossover between two homologous DNA duplexes (Holliday junction).. Its function is as follows. The RuvA-RuvB-RuvC complex processes Holliday junction (HJ) DNA during genetic recombination and DNA repair. Endonuclease that resolves HJ intermediates. Cleaves cruciform DNA by making single-stranded nicks across the HJ at symmetrical positions within the homologous arms, yielding a 5'-phosphate and a 3'-hydroxyl group; requires a central core of homology in the junction. The consensus cleavage sequence is 5'-(A/T)TT(C/G)-3'. Cleavage occurs on the 3'-side of the TT dinucleotide at the point of strand exchange. HJ branch migration catalyzed by RuvA-RuvB allows RuvC to scan DNA until it finds its consensus sequence, where it cleaves and resolves the cruciform DNA. This is Crossover junction endodeoxyribonuclease RuvC from Dehalococcoides mccartyi (strain ATCC BAA-2100 / JCM 16839 / KCTC 5957 / BAV1).